We begin with the raw amino-acid sequence, 1368 residues long: DNA-directed RNA polymerase subunit beta (1368 aa).

It belongs to the RNA polymerase beta chain family. The RNAP catalytic core consists of 2 alpha, 1 beta, 1 beta' and 1 omega subunit. When a sigma factor is associated with the core the holoenzyme is formed, which can initiate transcription.

It catalyses the reaction RNA(n) + a ribonucleoside 5'-triphosphate = RNA(n+1) + diphosphate. In terms of biological role, DNA-dependent RNA polymerase catalyzes the transcription of DNA into RNA using the four ribonucleoside triphosphates as substrates. In Burkholderia pseudomallei (strain K96243), this protein is DNA-directed RNA polymerase subunit beta.